A 394-amino-acid chain; its full sequence is Actin-related protein 2-B (394 aa).

ATP-binding positions include 160 to 162 (GDG), 214 to 218 (RMMKE), and 305 to 310 (GGSTMY).

The protein belongs to the actin family. ARP2 subfamily. In terms of assembly, component of the Arp2/3 complex composed of actr2/arp2, actr3/arp3, arpc1b, arpc2, arpc3, arpc4 and arpc5.

Its subcellular location is the cytoplasm. It is found in the cytoskeleton. It localises to the cell projection. The protein resides in the nucleus. In terms of biological role, ATP-binding component of the Arp2/3 complex, a multiprotein complex that mediates actin polymerization upon stimulation by nucleation-promoting factor (NPF). The Arp2/3 complex mediates the formation of branched actin networks in the cytoplasm, providing the force for cell motility. Seems to contact the pointed end of the daughter actin filament. In addition to its role in the cytoplasmic cytoskeleton, the Arp2/3 complex also promotes actin polymerization in the nucleus, thereby regulating gene transcription and repair of damaged DNA. The Arp2/3 complex promotes homologous recombination (HR) repair in response to DNA damage by promoting nuclear actin polymerization, leading to drive motility of double-strand breaks (DSBs). The polypeptide is Actin-related protein 2-B (actr2b) (Danio rerio (Zebrafish)).